The sequence spans 61 residues: Small ribosomal subunit protein uS14 (61 aa).

Zn(2+) contacts are provided by Cys-24, Cys-27, Cys-40, and Cys-43.

This sequence belongs to the universal ribosomal protein uS14 family. Zinc-binding uS14 subfamily. As to quaternary structure, part of the 30S ribosomal subunit. Contacts proteins S3 and S10. Requires Zn(2+) as cofactor.

In terms of biological role, binds 16S rRNA, required for the assembly of 30S particles and may also be responsible for determining the conformation of the 16S rRNA at the A site. This Mycobacterium sp. (strain JLS) protein is Small ribosomal subunit protein uS14.